A 402-amino-acid polypeptide reads, in one-letter code: Phosphoglycerate kinase (402 aa).

Substrate contacts are provided by residues Asp-24 to Asn-26, Arg-40, His-63 to Arg-66, Arg-122, and Arg-155. ATP is bound by residues Lys-206, Gly-297, Glu-328, and Gly-357–Ser-360.

The protein belongs to the phosphoglycerate kinase family. As to quaternary structure, monomer.

It localises to the cytoplasm. It catalyses the reaction (2R)-3-phosphoglycerate + ATP = (2R)-3-phospho-glyceroyl phosphate + ADP. It functions in the pathway carbohydrate degradation; glycolysis; pyruvate from D-glyceraldehyde 3-phosphate: step 2/5. The polypeptide is Phosphoglycerate kinase (Synechococcus sp. (strain CC9311)).